The primary structure comprises 295 residues: Diaminopimelate epimerase (295 aa).

The substrate site is built by Asn11 and Asn78. Cys87 acts as the Proton donor in catalysis. Residues 88 to 89 (GN), Asn163, Asn199, and 220 to 221 (ER) contribute to the substrate site. The Proton acceptor role is filled by Cys229. A substrate-binding site is contributed by 230–231 (GT).

Belongs to the diaminopimelate epimerase family. In terms of assembly, homodimer.

The protein localises to the cytoplasm. It catalyses the reaction (2S,6S)-2,6-diaminopimelate = meso-2,6-diaminopimelate. It participates in amino-acid biosynthesis; L-lysine biosynthesis via DAP pathway; DL-2,6-diaminopimelate from LL-2,6-diaminopimelate: step 1/1. Catalyzes the stereoinversion of LL-2,6-diaminopimelate (L,L-DAP) to meso-diaminopimelate (meso-DAP), a precursor of L-lysine and an essential component of the bacterial peptidoglycan. This is Diaminopimelate epimerase from Mycobacteroides abscessus (strain ATCC 19977 / DSM 44196 / CCUG 20993 / CIP 104536 / JCM 13569 / NCTC 13031 / TMC 1543 / L948) (Mycobacterium abscessus).